Consider the following 369-residue polypeptide: MLYSFHPYLKYFALLGLVPWSESCAQSKFVQKVYSAILIILNAVHFGISIYFPQSAELFLSLMVNVIVFVARIVCVTVIILQVMVHYDDYFRFCREMKYLGLRLQCELKIHVGRLKWQSYAKILALGIGFLVTVLPSIYVALSGSLLYFWSSLLSILIIRMQFVLVLLNVELLGHHVSLLGIRLQNVLECHLMGANCTLDGNANRLCSLEFLLALKQSHMQLHYLFTHFNDLFGWSILGTYVVLFSDSTVNIYWTQQVLVEVYEYKYLYATFSVFVPSFFNILVFCRCGEFCQRQSVLIGSYLRNLSCHPSIGRETSYKDLLMEFILQVEQNVLAINAEGFMSTDNSLLMSILAAKVTYLIVLMQFSSV.

At M1 to K32 the chain is on the cytoplasmic side. The helical transmembrane segment at V33–P53 threads the bilayer. The Extracellular segment spans residues Q54–F59. The chain crosses the membrane as a helical span at residues L60–I80. Topologically, residues L81 to K122 are cytoplasmic. A helical membrane pass occupies residues I123 to S143. Topologically, residues G144 to L147 are extracellular. The helical transmembrane segment at Y148 to L168 threads the bilayer. At N169–Y224 the chain is on the cytoplasmic side. A helical membrane pass occupies residues L225–F245. The Extracellular segment spans residues S246 to Y265. A helical membrane pass occupies residues K266–C286. The Cytoplasmic portion of the chain corresponds to R287–L348. Residues L349–S368 form a helical membrane-spanning segment. Position 369 (V369) is a topological domain, extracellular.

This sequence belongs to the insect chemoreceptor superfamily. Gustatory receptor (GR) family. Gr2a subfamily. Expressed in the adult labellar chemosensory neurons and in abdominal ganglions. In larvae, is expressed in neurons of the dorsal and posterior pharyngeal sense organs.

It is found in the cell membrane. Its function is as follows. Probable gustatory receptor which mediates acceptance or avoidance behavior, depending on its substrates. Has also atypical sensory function in organ not limited to conventional taste sensing like abdominal ganglions. The polypeptide is Putative gustatory receptor 39b (Gr39b) (Drosophila melanogaster (Fruit fly)).